The sequence spans 231 residues: Flagellar L-ring protein (231 aa).

An N-terminal signal peptide occupies residues 1–18 (MNRLLSLFALGGAVLLAG). The N-palmitoyl cysteine moiety is linked to residue Cys19. A lipid anchor (S-diacylglycerol cysteine) is attached at Cys19.

This sequence belongs to the FlgH family. The basal body constitutes a major portion of the flagellar organelle and consists of four rings (L,P,S, and M) mounted on a central rod.

The protein resides in the cell outer membrane. It localises to the bacterial flagellum basal body. Its function is as follows. Assembles around the rod to form the L-ring and probably protects the motor/basal body from shearing forces during rotation. In Pseudomonas putida (strain W619), this protein is Flagellar L-ring protein.